The following is a 65-amino-acid chain: Sec-independent protein translocase protein TatA (65 aa).

A helical membrane pass occupies residues 9-29 (ILIIVLLVVVVFGVGKLPQVG). A disordered region spans residues 40–65 (RKASTGEDAKEEVETKEETKPAEKSE). Residues 43 to 65 (STGEDAKEEVETKEETKPAEKSE) show a composition bias toward basic and acidic residues.

It belongs to the TatA/E family. In terms of assembly, forms a complex with TatC.

Its subcellular location is the cell membrane. In terms of biological role, part of the twin-arginine translocation (Tat) system that transports large folded proteins containing a characteristic twin-arginine motif in their signal peptide across membranes. TatA could form the protein-conducting channel of the Tat system. In Dehalococcoides mccartyi (strain ATCC BAA-2100 / JCM 16839 / KCTC 5957 / BAV1), this protein is Sec-independent protein translocase protein TatA.